A 316-amino-acid chain; its full sequence is Bifunctional peptidase and (3S)-lysyl hydroxylase Jmjd7 (316 aa).

Residues Val-128 to Asp-307 form the JmjC domain. 3 residues coordinate Fe cation: His-178, Asp-180, and His-277.

In terms of assembly, homodimer; disulfide-linked. Interacts with DRG1 and DRG2. Fe(2+) serves as cofactor.

It localises to the nucleus. The protein resides in the cytoplasm. The enzyme catalyses L-lysyl-[protein] + 2-oxoglutarate + O2 = (3S)-3-hydroxy-L-lysyl-[protein] + succinate + CO2. Its function is as follows. Bifunctional enzyme that acts both as an endopeptidase and 2-oxoglutarate-dependent monooxygenase. Endopeptidase that cleaves histones N-terminal tails at the carboxyl side of methylated arginine or lysine residues, to generate 'tailless nucleosomes', which may trigger transcription elongation. Preferentially recognizes and cleaves monomethylated and dimethylated arginine residues of histones H2, H3 and H4. After initial cleavage, continues to digest histones tails via its aminopeptidase activity. Additionally, may play a role in protein biosynthesis by modifying the translation machinery. Acts as a Fe(2+) and 2-oxoglutarate-dependent monooxygenase, catalyzing (S)-stereospecific hydroxylation at C-3 of 'Lys-22' of DRG1 and 'Lys-21' of DRG2 translation factors (TRAFAC), promoting their interaction with ribonucleic acids (RNA). The polypeptide is Bifunctional peptidase and (3S)-lysyl hydroxylase Jmjd7 (Mus musculus (Mouse)).